Here is a 608-residue protein sequence, read N- to C-terminus: Actin-interacting protein 1 (608 aa).

11 WD repeats span residues 62–101 (EHSC…HLLK), 106–149 (PIAG…GEIS), 150–190 (GQSK…FKMT), 193–232 (DHSR…LVGE), 237–276 (AHKG…LVSE), 323–362 (GHNK…NDRI), 366–403 (GHGN…YTDY), 444–483 (PIKY…LEPK), 487–526 (DHLG…PAHN), 531–570 (FHSA…KHTI), and 575–607 (HPQS…HVEN).

It belongs to the WD repeat AIP1 family. Expressed in pupal wing cells.

It localises to the cytoplasm. The protein localises to the cytoskeleton. Its function is as follows. Induces disassembly of actin filaments in conjunction with ADF/cofilin family proteins. Together with GMF, promotes Arp2/3-nucleated actin filament array disassembly. Essential for organismal and cell viability. Required for the development of normal wing cell planar polarity. In egg chambers and together with GMF, plays an important role in directional migration of border cell clusters. The protein is Actin-interacting protein 1 (flr) of Drosophila melanogaster (Fruit fly).